Here is a 300-residue protein sequence, read N- to C-terminus: Probable membrane transporter protein YtnM (300 aa).

The next 8 helical transmembrane spans lie at L4 to A24, L33 to V53, L76 to G96, Y102 to Y122, I139 to V159, L206 to V226, P231 to I251, and V260 to L280.

The protein belongs to the 4-toluene sulfonate uptake permease (TSUP) (TC 2.A.102) family.

It localises to the cell membrane. The protein is Probable membrane transporter protein YtnM (ytnM) of Bacillus subtilis (strain 168).